The chain runs to 229 residues: Uracil-DNA glycosylase (229 aa).

Aspartate 65 serves as the catalytic Proton acceptor.

Belongs to the uracil-DNA glycosylase (UDG) superfamily. UNG family.

Its subcellular location is the cytoplasm. It carries out the reaction Hydrolyzes single-stranded DNA or mismatched double-stranded DNA and polynucleotides, releasing free uracil.. Excises uracil residues from the DNA which can arise as a result of misincorporation of dUMP residues by DNA polymerase or due to deamination of cytosine. In Oceanobacillus iheyensis (strain DSM 14371 / CIP 107618 / JCM 11309 / KCTC 3954 / HTE831), this protein is Uracil-DNA glycosylase.